Reading from the N-terminus, the 359-residue chain is Peptide chain release factor 1 (359 aa).

Glutamine 235 carries the N5-methylglutamine modification. Residues 283-309 (QKAESERSQARRSQVGSGDRSERIRTY) form a disordered region.

This sequence belongs to the prokaryotic/mitochondrial release factor family. In terms of processing, methylated by PrmC. Methylation increases the termination efficiency of RF1.

It is found in the cytoplasm. Functionally, peptide chain release factor 1 directs the termination of translation in response to the peptide chain termination codons UAG and UAA. The sequence is that of Peptide chain release factor 1 from Brucella abortus (strain S19).